The chain runs to 522 residues: Sugar transport protein MST2 (522 aa).

Over 1-24 (MAAATAADVAEDTASVYSGKLTLY) the chain is Cytoplasmic. The helical transmembrane segment at 25–45 (VFLTCGVAATGGLIIGYDIGI) threads the bilayer. Over 46–82 (SGGVTSMDTFLGKFFPSVLHQEQTAQGTSQYCKFNSQ) the chain is Extracellular. A helical membrane pass occupies residues 83–103 (PLTAFTSSLYLAALVASFFVA). Over 104-111 (SFTRALGR) the chain is Cytoplasmic. Residues 112-132 (KWSMFGGGVSFLAGATLNGAA) form a helical membrane-spanning segment. The Extracellular segment spans residues 133-134 (RN). Residues 135–155 (VAMLIVGRILLGIGVAFCGLS) form a helical membrane-spanning segment. The Cytoplasmic segment spans residues 156–169 (TPIYLSEMAPPRLR). Residues 170 to 190 (GMLNIGLQLMITVGIFSANLV) form a helical membrane-spanning segment. At 191 to 204 (NYGAAKIRGGWGWR) the chain is on the extracellular side. Residues 205-225 (VSLGLAAAPACVIAVGSLFLP) form a helical membrane-spanning segment. Residues 226 to 291 (DSPSSLINRG…DVLQRRYRPQ (66 aa)) are Cytoplasmic-facing. The chain crosses the membrane as a helical span at residues 292-312 (LAMAVLIPFFQQLTGINVIMF). The Extracellular segment spans residues 313–329 (YAPVLFKTIGLGGDASL). Residues 330-350 (MSAVITGLVNIVATFVSIATV) form a helical membrane-spanning segment. The Cytoplasmic portion of the chain corresponds to 351-361 (DSLGRRKLLFQ). Residues 362–382 (GGCQMLVSQVIIGTLIGVVFG) form a helical membrane-spanning segment. At 383 to 391 (TSGDGNISR) the chain is on the extracellular side. Residues 392 to 412 (ALAVCIVVFICVYVAGFAWSW) traverse the membrane as a helical segment. The Cytoplasmic segment spans residues 413–434 (GPLGVLLPSEIFPLEVRPAGQS). A helical transmembrane segment spans residues 435–455 (ISVAVNMLCTFAVAEAFLPML). The Extracellular segment spans residues 456–459 (CHMR). The chain crosses the membrane as a helical span at residues 460-480 (FGLFYFFSGWVLVMTLFVSAF). Residues 481-522 (LPETKGVPIEKMTVVWRTHWFWGRFYCNQDADAHVQVANSKV) lie on the Cytoplasmic side of the membrane.

It belongs to the major facilitator superfamily. Sugar transporter (TC 2.A.1.1) family.

The protein localises to the membrane. Mediates active uptake of hexoses by sugar:proton symport. Can transport glucose. In Oryza sativa subsp. japonica (Rice), this protein is Sugar transport protein MST2.